A 147-amino-acid chain; its full sequence is uncharacterized protein (147 aa).

Transmembrane regions (helical) follow at residues 21-41 and 67-87; these read LMLWIAILIFVIAFAMIIVFV and ALFGLVFSVLGYLITALSIPL.

It localises to the cell membrane. This is an uncharacterized protein from Ureaplasma parvum serovar 3 (strain ATCC 700970).